The chain runs to 604 residues: uncharacterized protein (604 aa).

The tract at residues 239–259 (ELNSPQELNDPQELNNSQDLN) is disordered.

This is an uncharacterized protein from Escherichia coli (strain K12).